Here is a 319-residue protein sequence, read N- to C-terminus: Ficolin-2 (319 aa).

The N-terminal stretch at 1–22 (MVLGSAALFVLSLCVTELTLHA) is a signal peptide. The region spanning 45–101 (GCPGLPGALGPKGEAGAKGDRGESGLPGHPGKAGPTGPKGDRGEKGVRGEKGDTGPS) is the Collagen-like domain. The segment at 53–106 (LGPKGEAGAKGDRGESGLPGHPGKAGPTGPKGDRGEKGVRGEKGDTGPSQSCAT) is disordered. A compositionally biased stretch (basic and acidic residues) spans 83 to 97 (KGDRGEKGVRGEKGD). Residues 102-319 (QSCATGPRTC…KVSEMKVRLI (218 aa)) form the Fibrinogen C-terminal domain. Disulfide bonds link Cys104–Cys132 and Cys111–Cys139. Ca(2+)-binding residues include Asp255, Asp257, and Ser261. Residues Cys263 and Cys276 are joined by a disulfide bond. The N-linked (GlcNAc...) asparagine glycan is linked to Asn306.

This sequence belongs to the ficolin lectin family. Homotrimer. Interacts with elastin. Interacts with MASP1 and MASP2.

The protein localises to the secreted. Its function is as follows. May function in innate immunity through activation of the lectin complement pathway. Calcium-dependent and GlcNAc-binding lectin. This is Ficolin-2 (Fcn2) from Rattus norvegicus (Rat).